Here is a 350-residue protein sequence, read N- to C-terminus: 3-dehydroquinate synthase (350 aa).

Residues 106-110 (GVVGD), 130-131 (TS), Lys143, and Lys152 each bind NAD(+). Zn(2+) is bound by residues Glu185, His246, and His263.

It belongs to the sugar phosphate cyclases superfamily. Dehydroquinate synthase family. The cofactor is Co(2+). Zn(2+) serves as cofactor. NAD(+) is required as a cofactor.

It localises to the cytoplasm. The enzyme catalyses 7-phospho-2-dehydro-3-deoxy-D-arabino-heptonate = 3-dehydroquinate + phosphate. It participates in metabolic intermediate biosynthesis; chorismate biosynthesis; chorismate from D-erythrose 4-phosphate and phosphoenolpyruvate: step 2/7. In terms of biological role, catalyzes the conversion of 3-deoxy-D-arabino-heptulosonate 7-phosphate (DAHP) to dehydroquinate (DHQ). The protein is 3-dehydroquinate synthase of Clostridium perfringens (strain SM101 / Type A).